Reading from the N-terminus, the 207-residue chain is dTTP/UTP pyrophosphatase (207 aa).

Asp-86 acts as the Proton acceptor in catalysis.

This sequence belongs to the Maf family. YhdE subfamily. The cofactor is a divalent metal cation.

It localises to the cytoplasm. It carries out the reaction dTTP + H2O = dTMP + diphosphate + H(+). It catalyses the reaction UTP + H2O = UMP + diphosphate + H(+). Its function is as follows. Nucleoside triphosphate pyrophosphatase that hydrolyzes dTTP and UTP. May have a dual role in cell division arrest and in preventing the incorporation of modified nucleotides into cellular nucleic acids. This Nitrosospira multiformis (strain ATCC 25196 / NCIMB 11849 / C 71) protein is dTTP/UTP pyrophosphatase.